The sequence spans 156 residues: SsrA-binding protein (156 aa).

The protein belongs to the SmpB family.

The protein localises to the cytoplasm. In terms of biological role, required for rescue of stalled ribosomes mediated by trans-translation. Binds to transfer-messenger RNA (tmRNA), required for stable association of tmRNA with ribosomes. tmRNA and SmpB together mimic tRNA shape, replacing the anticodon stem-loop with SmpB. tmRNA is encoded by the ssrA gene; the 2 termini fold to resemble tRNA(Ala) and it encodes a 'tag peptide', a short internal open reading frame. During trans-translation Ala-aminoacylated tmRNA acts like a tRNA, entering the A-site of stalled ribosomes, displacing the stalled mRNA. The ribosome then switches to translate the ORF on the tmRNA; the nascent peptide is terminated with the 'tag peptide' encoded by the tmRNA and targeted for degradation. The ribosome is freed to recommence translation, which seems to be the essential function of trans-translation. This chain is SsrA-binding protein, found in Clostridium perfringens (strain 13 / Type A).